A 1131-amino-acid chain; its full sequence is cGMP-specific 3',5'-cyclic phosphodiesterase (1131 aa).

2 disordered regions span residues 1-26 and 42-150; these read MTDV…SAAT and GVAP…SQQD. A compositionally biased stretch (low complexity) spans 42–63; that stretch reads GVAPGAVPGPGSAAIPASSSSG. A compositionally biased stretch (polar residues) spans 75-86; sequence SNNNRPAATNRS. The segment covering 110-136 has biased composition (low complexity); sequence SSSTPSQSPSPSQSPSQASIQTQTSQQ. 2 consecutive GAF domains span residues 255 to 412 and 444 to 625; these read DIDV…GIGI and NLEC…GLGI. The PDEase domain occupies 655-978; that stretch reads SQDQTEKLTQ…RNWQDLAEKV (324 aa). His-731 serves as the catalytic Proton donor. A divalent metal cation-binding residues include His-735, His-771, Asp-772, and Asp-882. Disordered stretches follow at residues 1019–1048 and 1078–1131; these read QQSQ…TGAL and SHVS…CALL. Basic and acidic residues-rich tracts occupy residues 1024–1035 and 1078–1088; these read GSEDSHTPEHQR and SHVSEDMDDKS. The span at 1097–1117 shows a compositional bias: low complexity; the sequence is ASGSMGRMSASSSTSSAGGQM. Basic residues predominate over residues 1121-1131; it reads SKKRSKLCALL. Cys-1128 carries the post-translational modification Cysteine methyl ester. The S-farnesyl cysteine moiety is linked to residue Cys-1128. The propeptide at 1129–1131 is removed in mature form; sequence ALL.

Belongs to the cyclic nucleotide phosphodiesterase family. In terms of assembly, interacts with PrBP. Requires a divalent metal cation as cofactor.

It is found in the cell membrane. It carries out the reaction 3',5'-cyclic GMP + H2O = GMP + H(+). Functionally, has a role regulating cGMP transport in Malpighian tubule principal cells. In Drosophila erecta (Fruit fly), this protein is cGMP-specific 3',5'-cyclic phosphodiesterase.